Here is a 253-residue protein sequence, read N- to C-terminus: MFQPAPKRCFTIESLVAKDSPLPASRSEDPIRPAALSYANSSPINPFLNGFHSAAAAAAAGRGVYSNPDLVFAEAVSHPPNPAVPVHPVPPPHALAAHPLPSSHSPHPLFASQQRDPSTFYPWLIHRYRYLGHRFQGNDASPESFLLHNALARKPKRIRTAFSPSQLLRLEHAFEKNHYVVGAERKQLAHSLSLTETQVKVWFQNRRTKFKRQKLEEEGSDSQQKKKGTHHINRWRIATKQASPEEIDVTSDD.

The homeobox DNA-binding region spans 155 to 214; sequence PKRIRTAFSPSQLLRLEHAFEKNHYVVGAERKQLAHSLSLTETQVKVWFQNRRTKFKRQK. Residues 213–253 are disordered; it reads QKLEEEGSDSQQKKKGTHHINRWRIATKQASPEEIDVTSDD. The span at 225–234 shows a compositional bias: basic residues; it reads KKKGTHHINR.

Belongs to the EMX homeobox family. As to quaternary structure, interacts with translation initiation factor EIF4E.

It is found in the nucleus. The protein localises to the cell projection. Its subcellular location is the axon. Functionally, transcription factor, which in cooperation with EMX1, acts to generate the boundary between the roof and archipallium in the developing brain. May function in combination with OTX1/2 to specify cell fates in the developing central nervous system. In the inner ear, it controls the distribution of GPR156 at hair cell boundaries, and regulates the organization of stereociliary bundles in opposite orientations across the line of polarity reversal (LPR). The protein is Homeobox protein EMX2 (EMX2) of Bos taurus (Bovine).